A 255-amino-acid chain; its full sequence is Syntaxin-6 (255 aa).

Ser-2 carries the N-acetylserine modification. Residue Ser-2 is modified to Phosphoserine. Positions 2 to 168 (SMEDPFFVVK…QAQQQLIVEQ (167 aa)) are required for interaction with VPS51. The Cytoplasmic segment spans residues 2–234 (SMEDPFFVVK…VSHMTSDRRQ (233 aa)). Residues 41-74 (EEIDWTTNELRNNLRSIEWDLEDLDETISIVEAN) adopt a coiled-coil conformation. Phosphoserine is present on residues Ser-129 and Ser-152. The region spanning 163-225 (QLIVEQQDEQ…DNVMKKLAKV (63 aa)) is the t-SNARE coiled-coil homology domain. A helical; Anchor for type IV membrane protein transmembrane segment spans residues 235 to 255 (WCAIAILFAVLVVVLILFLVL).

Belongs to the syntaxin family. As to quaternary structure, identified in a complex containing STX6, STX12 and VAMP4. This complex also includes VTI1A. Binds EEA1. Interacts with VPS45A and GOPC. Interacts with MARCHF2; the interaction promotes MARCHF2-mediated ubiquitination and degradation of CFTR. Interacts with MARCHF3. Interacts with BLTP3B (via C-terminal coiled-coil domain). Interacts with BAIAP3; this interaction is increased in the presence of calcium. Interacts with VPS13B.

The protein localises to the golgi apparatus membrane. The protein resides in the golgi apparatus. It localises to the trans-Golgi network membrane. It is found in the recycling endosome membrane. SNARE promoting movement of transport vesicles to target membranes. Targets endosomes to the trans-Golgi network, and may therefore function in retrograde trafficking. Together with SNARE STX12, promotes movement of vesicles from endosomes to the cell membrane, and may therefore function in the endocytic recycling pathway. The sequence is that of Syntaxin-6 (Stx6) from Mus musculus (Mouse).